The primary structure comprises 1453 residues: Scavenger receptor cysteine-rich type 1 protein M160 (1453 aa).

The N-terminal stretch at 1 to 40 (MMLPQNSWHIDFGRCCCHQNLFSAVVTCILLLNSCFLISS) is a signal peptide. Residues 41-1359 (FNGTDLELRL…LKSLNASSGH (1319 aa)) lie on the Extracellular side of the membrane. Asn-42, Asn-78, Asn-120, and Asn-161 each carry an N-linked (GlcNAc...) asparagine glycan. SRCR domains follow at residues 48–148 (LRLV…VNCY), 155–255 (LRLV…LTCY), 262–362 (LRLV…VICS), 369–469 (LRLA…VICS), 476–576 (LRLV…VTCS), 583–683 (LRLV…VICS), 690–790 (LRLV…LICS), 795–895 (PRLV…VVCS), and 900–1000 (VRLV…VICT). Intrachain disulfides connect Cys-73–Cys-137, Cys-86–Cys-147, and Cys-117–Cys-127. 6 cysteine pairs are disulfide-bonded: Cys-180–Cys-244, Cys-193–Cys-254, Cys-224–Cys-234, Cys-287–Cys-351, Cys-300–Cys-361, and Cys-331–Cys-341. N-linked (GlcNAc...) asparagine glycans are attached at residues Asn-334, Asn-377, Asn-441, Asn-548, and Asn-637. 18 disulfide bridges follow: Cys-394–Cys-458, Cys-407–Cys-468, Cys-438–Cys-448, Cys-501–Cys-565, Cys-514–Cys-575, Cys-545–Cys-555, Cys-608–Cys-672, Cys-621–Cys-682, Cys-652–Cys-662, Cys-715–Cys-779, Cys-728–Cys-789, Cys-759–Cys-769, Cys-820–Cys-884, Cys-833–Cys-894, Cys-864–Cys-874, Cys-925–Cys-989, Cys-938–Cys-999, and Cys-969–Cys-979. Asn-972, Asn-1013, Asn-1084, and Asn-1104 each carry an N-linked (GlcNAc...) asparagine glycan. 3 consecutive SRCR domains span residues 1036-1136 (LRLV…VICS), 1141-1243 (LRLY…ITCE), and 1246-1346 (IRVR…VRCS). 3 disulfides stabilise this stretch: Cys-1061-Cys-1125, Cys-1074-Cys-1135, and Cys-1105-Cys-1115. Residues Asn-1161 and Asn-1171 are each glycosylated (N-linked (GlcNAc...) asparagine). 5 disulfides stabilise this stretch: Cys-1181–Cys-1242, Cys-1212–Cys-1222, Cys-1271–Cys-1335, Cys-1284–Cys-1345, and Cys-1315–Cys-1325. Residues Asn-1318 and Asn-1354 are each glycosylated (N-linked (GlcNAc...) asparagine). A helical transmembrane segment spans residues 1360–1380 (LALILSSIFGLLLLVLFILFL). Residues 1381-1453 (TWCRVQKQKH…GVLPASEATK (73 aa)) lie on the Cytoplasmic side of the membrane. Over residues 1418 to 1435 (EDPHGTRTSDDTPNHGCE) the composition is skewed to basic and acidic residues. The interval 1418–1453 (EDPHGTRTSDDTPNHGCEDASDTSLLGVLPASEATK) is disordered.

As to expression, isoform 1 is highly expressed in the spleen, lymph nodes, thymus, and fetal liver and weakly expressed in bone marrow and no expression was found in peripheral blood leukocytes. Isoform 1 expression is restricted to the monocyte and macrophage cell lines. Isoform 2 is only expressed in spleen.

Its subcellular location is the cell membrane. The protein localises to the secreted. This Homo sapiens (Human) protein is Scavenger receptor cysteine-rich type 1 protein M160 (CD163L1).